The chain runs to 168 residues: MASGVMVSDDVVKVFNDMKVRHQLSPEEAKKRKKAVIFCLSDDKKTIILEPGKEILQGDVGCNVEDPYKTFVKMLPRNDCRYALYDALYETKETKKEDLVFVFWAPEEASLKSKMIYASSKDAIRKRFTGIKHEWQTNTYDDINDPCNLADKLGGNTVVSLEGKSLRS.

At A2 the chain carries N-acetylalanine. The region spanning 4–153 (GVMVSDDVVK…NDPCNLADKL (150 aa)) is the ADF-H domain. The Nuclear localization signal motif lies at 30 to 34 (KKRKK).

This sequence belongs to the actin-binding proteins ADF family. In terms of processing, inactive when phosphorylated. Phosphorylation levels vary during development. Oocytes contain only the phosphorylated form, and 80-95% of cfl1 protein is phosphorylated in unfertilized eggs. Rapid dephosphorylation occurs within 30 minutes after fertilization. Phosphorylation levels increase again between the morula and blastula stages (5-8 hpf) and then decrease again as gastrulation approaches. Dephosphorylated by pdxp. As to expression, expressed diffusely in both animal and vegetal hemispheres of the oocyte. During cleavage, expression accumulates around the cleavage furrow, along the vegetal membrane, and later in the midbody. Strongly expressed in the animal hemisphere during blastula stages, with most cells showing expression by gastrulation. By stage 17, expression is highest in cells of the developing neuroectoderm, and at stage 24 the notochord, neural tube, neural crest, somites and some cells of the archenteron show high expression. By stage 35, expression has declined in the notochord, but remains in the neural tube, epidermis and a layer of cells in the archenteron. Also highly expressed in the retina and neuronal cell bodies at the base of the cement gland but not the cement gland itself. At stage 38, expression is widespread, being highest in the nervous system and retina. In the adult, expression is high in the brain, heart, oocyte, stomach, and low in skeletal muscle.

Its subcellular location is the nucleus matrix. It localises to the cytoplasm. The protein resides in the cytoskeleton. The protein localises to the cell cortex. It is found in the membrane. Its function is as follows. May play a role in the regulation of cell morphology and cytoskeletal organization. Binds to F-actin and exhibits pH-sensitive F-actin depolymerizing activity. Required for formation of the cleavage furrow during cytokinesis. The protein is Cofilin-1-B (cfl1-b) of Xenopus laevis (African clawed frog).